We begin with the raw amino-acid sequence, 344 residues long: Bifunctional trans-3-hydroxy-L-proline dehydratase/2-epimerase (344 aa).

Ser-90 (proton acceptor) is an active-site residue. Residues 91-92 (GS), Asp-252, and 257-258 (GT) contribute to the substrate site.

Belongs to the proline racemase family.

It catalyses the reaction trans-3-hydroxy-L-proline = 1-pyrroline-2-carboxylate + H2O. The catalysed reaction is trans-3-hydroxy-L-proline = cis-3-hydroxy-D-proline. Its function is as follows. Bifunctional enzyme catalyzing both the dehydration of trans-3-hydroxy-L-proline (t3LHyp) to Delta(1)-pyrroline-2-carboxylate (Pyr2C) and 2-epimerization of t3LHyp to cis-3-hydroxy-D-proline (c3DHyp). No dehydratase activity with L-proline, trans-4-hydroxy-L-proline (t4LHyp), cis-4-hydroxy-L-proline (c4LHyp), D-proline, cis-4-hydroxy-D-proline (c4DHyp), trans-4-hydroxy-D-proline (t4DHyp) or L-serine as substrates. Displays neither t4LHyp epimerase nor proline racemase activity. Is likely involved in a degradation pathway that converts t3LHyp to L-proline, which would allow P.aeruginosa to grow on t3LHyp as a sole carbon source. The chain is Bifunctional trans-3-hydroxy-L-proline dehydratase/2-epimerase from Pseudomonas aeruginosa (strain ATCC 15692 / DSM 22644 / CIP 104116 / JCM 14847 / LMG 12228 / 1C / PRS 101 / PAO1).